Reading from the N-terminus, the 217-residue chain is MQHEFWHQRWQENRIGFHQFTPSPLLVDYFNELGLKTSARIFVPLSGKTLDISWLLQQGYHVVAIELSQIAVTSLIEQLVEDFDIQFESSEKNNLIHYHHPQIDIFVGDFFDLSKEQLGQVDAIFDRAALIALPDDIRQDYVQHLIEISGAASQFLISYQYDAGSHEGPPFSVNAEEIKQLYAEAYDIRLLKEQLVDASQNKGNHPKSTLWILTAKF.

Residues Trp10, Leu45, Glu66, and Arg127 each coordinate S-adenosyl-L-methionine.

This sequence belongs to the class I-like SAM-binding methyltransferase superfamily. TPMT family.

The protein localises to the cytoplasm. The catalysed reaction is S-adenosyl-L-methionine + a thiopurine = S-adenosyl-L-homocysteine + a thiopurine S-methylether.. The chain is Thiopurine S-methyltransferase from Acinetobacter baylyi (strain ATCC 33305 / BD413 / ADP1).